Consider the following 262-residue polypeptide: 3-deoxy-manno-octulosonate cytidylyltransferase (262 aa).

This sequence belongs to the KdsB family.

Its subcellular location is the cytoplasm. It carries out the reaction 3-deoxy-alpha-D-manno-oct-2-ulosonate + CTP = CMP-3-deoxy-beta-D-manno-octulosonate + diphosphate. The protein operates within nucleotide-sugar biosynthesis; CMP-3-deoxy-D-manno-octulosonate biosynthesis; CMP-3-deoxy-D-manno-octulosonate from 3-deoxy-D-manno-octulosonate and CTP: step 1/1. It participates in bacterial outer membrane biogenesis; lipopolysaccharide biosynthesis. Activates KDO (a required 8-carbon sugar) for incorporation into bacterial lipopolysaccharide in Gram-negative bacteria. This is 3-deoxy-manno-octulosonate cytidylyltransferase from Acidovorax sp. (strain JS42).